The following is a 551-amino-acid chain: Cu(2+) suppressing and bleomycin sensitive protein 1 (551 aa).

2 coiled-coil regions span residues 174 to 213 and 249 to 300; these read REID…EEID and NSLL…DSGK. A disordered region spans residues 513–551; that stretch reads EEKAQNSTSSDGSDDDDNGESGIDSNSNDSEPESEYQQE. Residues 532 to 541 are compositionally biased toward low complexity; the sequence is ESGIDSNSND. The span at 542–551 shows a compositional bias: acidic residues; that stretch reads SEPESEYQQE.

It belongs to the CUB1 family. As to quaternary structure, monomer. Phosphorylated by PKA in vitro.

The protein resides in the cytoplasm. It is found in the nucleus. Involved in bleomycin tolerance with links to DNA repair and/or proteasome function. This chain is Cu(2+) suppressing and bleomycin sensitive protein 1 (CUB1), found in Saccharomyces cerevisiae (strain ATCC 204508 / S288c) (Baker's yeast).